Reading from the N-terminus, the 428-residue chain is Enolase (428 aa).

Gln163 lines the (2R)-2-phosphoglycerate pocket. The active-site Proton donor is the Glu205. Mg(2+)-binding residues include Asp243, Glu286, and Asp313. Lys338, Arg367, Ser368, and Lys389 together coordinate (2R)-2-phosphoglycerate. Residue Lys338 is the Proton acceptor of the active site.

This sequence belongs to the enolase family. Mg(2+) serves as cofactor.

The protein localises to the cytoplasm. It is found in the secreted. It localises to the cell surface. The enzyme catalyses (2R)-2-phosphoglycerate = phosphoenolpyruvate + H2O. It participates in carbohydrate degradation; glycolysis; pyruvate from D-glyceraldehyde 3-phosphate: step 4/5. Functionally, catalyzes the reversible conversion of 2-phosphoglycerate (2-PG) into phosphoenolpyruvate (PEP). It is essential for the degradation of carbohydrates via glycolysis. In Polaromonas naphthalenivorans (strain CJ2), this protein is Enolase.